Reading from the N-terminus, the 478-residue chain is Glycogen synthase (478 aa).

Lysine 15 serves as a coordination point for ADP-alpha-D-glucose.

This sequence belongs to the glycosyltransferase 1 family. Bacterial/plant glycogen synthase subfamily.

The enzyme catalyses [(1-&gt;4)-alpha-D-glucosyl](n) + ADP-alpha-D-glucose = [(1-&gt;4)-alpha-D-glucosyl](n+1) + ADP + H(+). It participates in glycan biosynthesis; glycogen biosynthesis. Its function is as follows. Synthesizes alpha-1,4-glucan chains using ADP-glucose. This is Glycogen synthase from Actinobacillus pleuropneumoniae serotype 5b (strain L20).